An 89-amino-acid polypeptide reads, in one-letter code: Small ribosomal subunit protein uS15 (89 aa).

This sequence belongs to the universal ribosomal protein uS15 family. Part of the 30S ribosomal subunit. Forms a bridge to the 50S subunit in the 70S ribosome, contacting the 23S rRNA.

Functionally, one of the primary rRNA binding proteins, it binds directly to 16S rRNA where it helps nucleate assembly of the platform of the 30S subunit by binding and bridging several RNA helices of the 16S rRNA. Its function is as follows. Forms an intersubunit bridge (bridge B4) with the 23S rRNA of the 50S subunit in the ribosome. The sequence is that of Small ribosomal subunit protein uS15 from Lactobacillus helveticus (strain DPC 4571).